We begin with the raw amino-acid sequence, 819 residues long: Leucine--tRNA ligase (819 aa).

Positions 40–51 (PYPSGAGLHVGH) match the 'HIGH' region motif. Positions 600–604 (KMSKS) match the 'KMSKS' region motif. Lys-603 provides a ligand contact to ATP.

Belongs to the class-I aminoacyl-tRNA synthetase family.

It is found in the cytoplasm. It carries out the reaction tRNA(Leu) + L-leucine + ATP = L-leucyl-tRNA(Leu) + AMP + diphosphate. In Chlamydia trachomatis serovar D (strain ATCC VR-885 / DSM 19411 / UW-3/Cx), this protein is Leucine--tRNA ligase.